The sequence spans 166 residues: MRILGIDPGIAIVGFGVVDKEGSQLRPVQYGSIQTEAGLPVPLRLKQIFEAMQSLLETYRPDEMSVEKLFFNKNVTTAFTVGQARGVIILAAELAGVPVYEYTPMQVKQAVTGYGGAEKKQIQEMTKLLLRLKEVPKPDDVADALGIAITHAQFRAFISISEGVKK.

Catalysis depends on residues Asp7, Glu67, and Asp140. 3 residues coordinate Mg(2+): Asp7, Glu67, and Asp140.

It belongs to the RuvC family. As to quaternary structure, homodimer which binds Holliday junction (HJ) DNA. The HJ becomes 2-fold symmetrical on binding to RuvC with unstacked arms; it has a different conformation from HJ DNA in complex with RuvA. In the full resolvosome a probable DNA-RuvA(4)-RuvB(12)-RuvC(2) complex forms which resolves the HJ. It depends on Mg(2+) as a cofactor.

The protein resides in the cytoplasm. The enzyme catalyses Endonucleolytic cleavage at a junction such as a reciprocal single-stranded crossover between two homologous DNA duplexes (Holliday junction).. In terms of biological role, the RuvA-RuvB-RuvC complex processes Holliday junction (HJ) DNA during genetic recombination and DNA repair. Endonuclease that resolves HJ intermediates. Cleaves cruciform DNA by making single-stranded nicks across the HJ at symmetrical positions within the homologous arms, yielding a 5'-phosphate and a 3'-hydroxyl group; requires a central core of homology in the junction. The consensus cleavage sequence is 5'-(A/T)TT(C/G)-3'. Cleavage occurs on the 3'-side of the TT dinucleotide at the point of strand exchange. HJ branch migration catalyzed by RuvA-RuvB allows RuvC to scan DNA until it finds its consensus sequence, where it cleaves and resolves the cruciform DNA. This Brevibacillus brevis (strain 47 / JCM 6285 / NBRC 100599) protein is Crossover junction endodeoxyribonuclease RuvC.